A 428-amino-acid chain; its full sequence is L-glutamyl-[BtrI acyl-carrier protein] decarboxylase (428 aa).

K49 carries the post-translational modification N6-(pyridoxal phosphate)lysine. Pyridoxal 5'-phosphate contacts are provided by residues G228, 269 to 272 (ESGR), and Y375. 2 residues coordinate substrate: R272 and Y375.

It belongs to the Orn/Lys/Arg decarboxylase class-II family. As to quaternary structure, homodimer. Requires pyridoxal 5'-phosphate as cofactor.

The enzyme catalyses gamma-L-glutamyl-[BtrI ACP] + H(+) = 4-aminobutanoyl-[BtrI ACP] + CO2. It participates in antibiotic biosynthesis; butirosin biosynthesis. Pyridoxal phosphate-dependent decarboxylase that catalyzes 1 step in the biosynthesis of the side chain of the aminoglycoside antibiotics in the biosynthetic pathway of butirosin. Able to decarboxylate L-ornithine, L-arginine, L-lysine, but not L-glutamate or any D-amino acids. Has low activity with substrates not bound to an acyl-carrier protein. In Niallia circulans (Bacillus circulans), this protein is L-glutamyl-[BtrI acyl-carrier protein] decarboxylase (btrK).